We begin with the raw amino-acid sequence, 1296 residues long: Histone-lysine N-methyltransferase EHMT1 (1296 aa).

2 disordered regions span residues 1 to 111 and 170 to 200; these read MAAA…NHVT and PQTPTTAPTVPGEGSADTEDRKPTASGTDVR. Ala-2 is modified (N-acetylalanine). Positions 14-31 are enriched in basic and acidic residues; the sequence is QETKQDCCMKTELLREDT. Lys-23 is covalently cross-linked (Glycyl lysine isopeptide (Lys-Gly) (interchain with G-Cter in SUMO1); alternate). Lys-23 is covalently cross-linked (Glycyl lysine isopeptide (Lys-Gly) (interchain with G-Cter in SUMO2); alternate). Residues 77–89 show a composition bias toward polar residues; sequence NTRASPQEGTNRV. Basic and acidic residues predominate over residues 97 to 106; that stretch reads VSERDTEVGK. Glycyl lysine isopeptide (Lys-Gly) (interchain with G-Cter in SUMO2) cross-links involve residues Lys-191, Lys-229, Lys-232, Lys-315, and Lys-325. The tract at residues 341 to 470 is disordered; sequence SLEMDSEDED…SSPGSMEQAA (130 aa). The span at 342 to 360 shows a compositional bias: acidic residues; the sequence is LEMDSEDEDSDELEDDEDH. Over residues 371-391 the composition is skewed to basic and acidic residues; it reads EDSRTSKESMSETDRAAKMDG. Positions 392–414 are enriched in acidic residues; sequence DSEEEQESPDTGEDEDGGDESDL. Lys-430 is covalently cross-linked (Glycyl lysine isopeptide (Lys-Gly) (interchain with G-Cter in SUMO2)). Ser-433 bears the Phosphoserine mark. The span at 438-450 shows a compositional bias: basic residues; the sequence is PARKRRRRSRKKP. Position 481 is a phosphoserine (Ser-481). Glycyl lysine isopeptide (Lys-Gly) (interchain with G-Cter in SUMO2) cross-links involve residues Lys-559, Lys-644, Lys-659, and Lys-729. Positions 653–714 are disordered; sequence LAPGQEKSLA…PTSGLSQGPG (62 aa). ANK repeat units follow at residues 735–764, 770–799, 803–832, 836–866, 870–899, 903–932, 936–965, and 969–1002; these read FHPKQLYFSARQGELQKVLLMLVDGIDPNF, SKRSPLHAAAEAGHVDICHMLVQAGANIDT, DQRTPLMEAAENNHLDAVKYLIKAGAQVDP, EGSTCLHLAAKKGHYDVVQYLLSNGQMDVNC, GGWTPMIWATEYKHVELVKLLLSKGSDINI, EENICLHWAAFSGCVDIAEILLAAKCDLHA, HGDSPLHIAARENRYDCVVLFLSRDSDVTL, and EGETPLQCASLSSQVWSALQMSKALRDSAPDKPV. The segment at 903-905 is histone H3K9me binding; sequence EEN. Position 1046 is a phosphoserine (Ser-1046). The Pre-SET domain maps to 1058 to 1121; sequence QYCVCVDDCS…NCRNRVVQNG (64 aa). Zn(2+) is bound by residues Cys-1060, Cys-1062, Cys-1066, Cys-1071, Cys-1073, Cys-1103, Cys-1107, Cys-1109, and Cys-1113. The SET domain maps to 1124-1241; sequence ARLQLYRTQD…AGEQLGFDYG (118 aa). S-adenosyl-L-methionine is bound by residues 1134–1136, Tyr-1171, and 1198–1199; these read MGW and NH. The segment at 1160–1179 is interaction with histone H3; it reads DSEADVREEDSYLFDLDNKD. Cys-1201 serves as a coordination point for Zn(2+). The tract at residues 1240 to 1243 is interaction with histone H3; the sequence is YGER. Cys-1254 contributes to the Zn(2+) binding site. S-adenosyl-L-methionine is bound at residue Arg-1255. Residues Cys-1256 and Cys-1261 each coordinate Zn(2+). The disordered stretch occupies residues 1271 to 1296; sequence RQASAAQEPQENGLPDTSSAAAADPL.

The protein belongs to the class V-like SAM-binding methyltransferase superfamily. Interacts with WIZ. Part of the E2F6.com-1 complex in G0 phase composed of E2F6, MGA, MAX, TFDP1, CBX3, BAT8, EHMT1, RING1, RNF2, MBLR, L3MBTL2 and YAF2. Interacts with MPHOSPH8. Interacts with CDYL. Interacts with REST only in the presence of CDYL. Part of a complex containing at least CDYL, REST, WIZ, SETB1, EHMT1 and EHMT2. Heterodimer; heterodimerizes with EHMT2. Interacts (via ANK repeats) with RELA (when monomethylated at 'Lys-310'). Interacts with Baz2b. In terms of tissue distribution, ubiquitous.

The protein localises to the nucleus. Its subcellular location is the chromosome. It carries out the reaction N(6)-methyl-L-lysyl(9)-[histone H3] + S-adenosyl-L-methionine = N(6),N(6)-dimethyl-L-lysyl(9)-[histone H3] + S-adenosyl-L-homocysteine + H(+). It catalyses the reaction L-lysyl(9)-[histone H3] + S-adenosyl-L-methionine = N(6)-methyl-L-lysyl(9)-[histone H3] + S-adenosyl-L-homocysteine + H(+). Its activity is regulated as follows. Methyltransferase activity is inhibited by BIX-01294. Efficiently inhibited by compound E72, a BIX-01294 derivative in which the diazepane ring and the benzyl are replaced with a 3-dimethylaminopropyl and a 5-aminopentyl group at sites B and C, respectively. Functionally, histone methyltransferase that specifically mono- and dimethylates 'Lys-9' of histone H3 (H3K9me1 and H3K9me2, respectively) in euchromatin. H3K9me represents a specific tag for epigenetic transcriptional repression by recruiting HP1 proteins to methylated histones. Also weakly methylates 'Lys-27' of histone H3 (H3K27me). Also required for DNA methylation, the histone methyltransferase activity is not required for DNA methylation, suggesting that these 2 activities function independently. Probably targeted to histone H3 by different DNA-binding proteins like E2F6, MGA, MAX and/or DP1. During G0 phase, it probably contributes to silencing of MYC- and E2F-responsive genes, suggesting a role in G0/G1 transition in cell cycle. In addition to the histone methyltransferase activity, also methylates non-histone proteins: mediates dimethylation of 'Lys-373' of p53/TP53. Represses the expression of mitochondrial function-related genes, perhaps by occupying their promoter regions, working in concert with probable chromatin reader Baz2b. This chain is Histone-lysine N-methyltransferase EHMT1 (Ehmt1), found in Mus musculus (Mouse).